We begin with the raw amino-acid sequence, 321 residues long: Tetraacyldisaccharide 4'-kinase (321 aa).

54–61 (SVGGTGKT) lines the ATP pocket.

This sequence belongs to the LpxK family.

The catalysed reaction is a lipid A disaccharide + ATP = a lipid IVA + ADP + H(+). Its pathway is glycolipid biosynthesis; lipid IV(A) biosynthesis; lipid IV(A) from (3R)-3-hydroxytetradecanoyl-[acyl-carrier-protein] and UDP-N-acetyl-alpha-D-glucosamine: step 6/6. In terms of biological role, transfers the gamma-phosphate of ATP to the 4'-position of a tetraacyldisaccharide 1-phosphate intermediate (termed DS-1-P) to form tetraacyldisaccharide 1,4'-bis-phosphate (lipid IVA). The chain is Tetraacyldisaccharide 4'-kinase from Rickettsia typhi (strain ATCC VR-144 / Wilmington).